The chain runs to 247 residues: Large ribosomal subunit protein uL24m (247 aa).

The KOW domain maps to 84–117 (FFRGDRIEVLVGKDKGKQGIVTQVIPERNWVIVE).

The protein belongs to the universal ribosomal protein uL24 family. In terms of assembly, component of the mitochondrial ribosome large subunit (39S) which comprises a 16S rRNA and about 50 distinct proteins.

It localises to the mitochondrion. The sequence is that of Large ribosomal subunit protein uL24m (mRpL24) from Drosophila pseudoobscura pseudoobscura (Fruit fly).